Consider the following 338-residue polypeptide: Uroporphyrinogen decarboxylase (338 aa).

Substrate contacts are provided by residues 21–25, D71, Y146, S201, and H316; that span reads RQAGR.

It belongs to the uroporphyrinogen decarboxylase family. Homodimer.

The protein localises to the cytoplasm. It carries out the reaction uroporphyrinogen III + 4 H(+) = coproporphyrinogen III + 4 CO2. Its pathway is porphyrin-containing compound metabolism; protoporphyrin-IX biosynthesis; coproporphyrinogen-III from 5-aminolevulinate: step 4/4. In terms of biological role, catalyzes the decarboxylation of four acetate groups of uroporphyrinogen-III to yield coproporphyrinogen-III. This chain is Uroporphyrinogen decarboxylase, found in Rickettsia akari (strain Hartford).